Here is a 217-residue protein sequence, read N- to C-terminus: Somatotropin (217 aa).

A signal peptide spans Met-1–Ala-27. His-46 serves as a coordination point for Zn(2+). A disulfide bridge connects residues Cys-79 and Cys-190. Ser-132 is modified (phosphoserine). Residue Glu-199 coordinates Zn(2+). Cysteines 207 and 215 form a disulfide.

The protein belongs to the somatotropin/prolactin family.

It is found in the secreted. Its function is as follows. Plays an important role in growth control. Its major role in stimulating body growth is to stimulate the liver and other tissues to secrete IGF1. It stimulates both the differentiation and proliferation of myoblasts. It also stimulates amino acid uptake and protein synthesis in muscle and other tissues. This chain is Somatotropin (GH1), found in Giraffa camelopardalis (Giraffe).